A 103-amino-acid polypeptide reads, in one-letter code: Small ribosomal subunit protein uS10 (103 aa).

The protein belongs to the universal ribosomal protein uS10 family. As to quaternary structure, part of the 30S ribosomal subunit.

In terms of biological role, involved in the binding of tRNA to the ribosomes. The sequence is that of Small ribosomal subunit protein uS10 from Buchnera aphidicola subsp. Acyrthosiphon pisum (strain 5A).